A 255-amino-acid polypeptide reads, in one-letter code: Sulfate transporter CysZ (255 aa).

4 helical membrane passes run 26 to 46, 71 to 91, 150 to 170, and 211 to 231; these read LFVLLPLAINLVLFVGLIYFA, LLWPLFVVLVVLMVFFTFTML, LFILSFIPVVNLIAAPLWLLF, and IVYLVLLVPVVNLLMMPAAVA.

The protein belongs to the CysZ family.

It localises to the cell inner membrane. Its function is as follows. High affinity, high specificity proton-dependent sulfate transporter, which mediates sulfate uptake. Provides the sulfur source for the cysteine synthesis pathway. The protein is Sulfate transporter CysZ of Pseudomonas fluorescens (strain SBW25).